Here is a 143-residue protein sequence, read N- to C-terminus: Hemoglobin subunit alpha (143 aa).

Residues 2–143 (SLTARDKSVV…LSAALADKYR (142 aa)) form the Globin domain. H60 lines the O2 pocket. H89 lines the heme b pocket.

The protein belongs to the globin family. In terms of assembly, heterotetramer of two alpha chains and two beta chains. Red blood cells.

Its function is as follows. Involved in oxygen transport from gills to the various peripheral tissues. This chain is Hemoglobin subunit alpha (hba), found in Salmo salar (Atlantic salmon).